We begin with the raw amino-acid sequence, 249 residues long: uncharacterized protein (249 aa).

Residues 51-67 (IPKDSLTNGKSSKNCMS) are compositionally biased toward polar residues. 2 disordered regions span residues 51-131 (IPKD…DSPV) and 205-240 (YLNA…SSDG). Residues 93–106 (SFQSMNSSMSSSTQ) show a composition bias toward low complexity. Over residues 110–129 (RILDEKNKDQSSSNENDRDS) the composition is skewed to basic and acidic residues.

It belongs to the asfivirus DP238L family.

This is an uncharacterized protein from African swine fever virus (isolate Tick/Malawi/Lil 20-1/1983) (ASFV).